The primary structure comprises 318 residues: NADH-quinone oxidoreductase subunit H 2 (318 aa).

A run of 9 helical transmembrane segments spans residues 4–24 (LLIALFSLILLLALLGAAGVF), 77–97 (LAPALAAFPMLAGFGVVAFAP), 106–126 (VGVLFVMGMLALTVWALVLGA), 146–166 (LAYESFLGLSLMGCVLLAGSF), 179–199 (LWFILLQPLGAALFFLAGLAA), 214–234 (LVAGFMTEYSGMSFALFFLGE), 238–258 (ILLVAALFTTLFLGGWAGPIL), 262–282 (VWFGLKVAAISVVFVWLRAAL), and 293–313 (FAWKVALPLALLNLLVTAWIA).

Belongs to the complex I subunit 1 family. In terms of assembly, NDH-1 is composed of 14 different subunits. Subunits NuoA, H, J, K, L, M, N constitute the membrane sector of the complex.

The protein localises to the cell inner membrane. It catalyses the reaction a quinone + NADH + 5 H(+)(in) = a quinol + NAD(+) + 4 H(+)(out). Its function is as follows. NDH-1 shuttles electrons from NADH, via FMN and iron-sulfur (Fe-S) centers, to quinones in the respiratory chain. The immediate electron acceptor for the enzyme in this species is believed to be ubiquinone. Couples the redox reaction to proton translocation (for every two electrons transferred, four hydrogen ions are translocated across the cytoplasmic membrane), and thus conserves the redox energy in a proton gradient. This subunit may bind ubiquinone. The sequence is that of NADH-quinone oxidoreductase subunit H 2 from Cereibacter sphaeroides (strain ATCC 17029 / ATH 2.4.9) (Rhodobacter sphaeroides).